A 366-amino-acid chain; its full sequence is UDP-N-acetylenolpyruvoylglucosamine reductase (366 aa).

Residues 27–197 (LGGPAAGFVV…LRVRFLLRDG (171 aa)) form the FAD-binding PCMH-type domain. Arginine 175 is a catalytic residue. Serine 252 functions as the Proton donor in the catalytic mechanism. The active site involves glutamate 358.

The protein belongs to the MurB family. Requires FAD as cofactor.

The protein localises to the cytoplasm. It carries out the reaction UDP-N-acetyl-alpha-D-muramate + NADP(+) = UDP-N-acetyl-3-O-(1-carboxyvinyl)-alpha-D-glucosamine + NADPH + H(+). It functions in the pathway cell wall biogenesis; peptidoglycan biosynthesis. Cell wall formation. The chain is UDP-N-acetylenolpyruvoylglucosamine reductase from Saccharopolyspora erythraea (strain ATCC 11635 / DSM 40517 / JCM 4748 / NBRC 13426 / NCIMB 8594 / NRRL 2338).